The chain runs to 197 residues: Small ribosomal subunit protein uS4A (197 aa).

Positions 107 to 181 constitute an S4 RNA-binding domain; the sequence is RRLQTQVYKL…VARRNAARKA (75 aa). Residues 160 to 197 form a disordered region; it reads PTSPFGGARPGRVARRNAARKAEASGEAADEADEADEE. Lys-180 is covalently cross-linked (Glycyl lysine isopeptide (Lys-Gly) (interchain with G-Cter in ubiquitin)). Ser-184 is modified (phosphoserine). Residues 187-197 are compositionally biased toward acidic residues; it reads AADEADEADEE.

The protein belongs to the universal ribosomal protein uS4 family. Component of the small ribosomal subunit (SSU). Mature yeast ribosomes consist of a small (40S) and a large (60S) subunit. The 40S small subunit contains 1 molecule of ribosomal RNA (18S rRNA) and 33 different proteins (encoded by 57 genes). The large 60S subunit contains 3 rRNA molecules (25S, 5.8S and 5S rRNA) and 46 different proteins (encoded by 81 genes). Interacts with snoRNA U3. uS11 interacts with MPP10. Component of the ribosomal small subunit (SSU) processome composed of at least 40 protein subunits and snoRNA U3.

It localises to the cytoplasm. The protein resides in the nucleus. Its subcellular location is the nucleolus. Functionally, component of the ribosome, a large ribonucleoprotein complex responsible for the synthesis of proteins in the cell. The small ribosomal subunit (SSU) binds messenger RNAs (mRNAs) and translates the encoded message by selecting cognate aminoacyl-transfer RNA (tRNA) molecules. The large subunit (LSU) contains the ribosomal catalytic site termed the peptidyl transferase center (PTC), which catalyzes the formation of peptide bonds, thereby polymerizing the amino acids delivered by tRNAs into a polypeptide chain. The nascent polypeptides leave the ribosome through a tunnel in the LSU and interact with protein factors that function in enzymatic processing, targeting, and the membrane insertion of nascent chains at the exit of the ribosomal tunnel. uS4 is involved in nucleolar processing of pre-18S ribosomal RNA and ribosome assembly. This Saccharomyces cerevisiae (strain ATCC 204508 / S288c) (Baker's yeast) protein is Small ribosomal subunit protein uS4A.